Reading from the N-terminus, the 787-residue chain is ER degradation-enhancing alpha-mannosidase-like protein 1 (787 aa).

An N-terminal signal peptide occupies residues 1–22 (MGSLHSIFCVCLILLCIFKENS). N-linked (GlcNAc...) asparagine glycosylation is found at Asn-479, Asn-609, Asn-670, Asn-693, and Asn-756.

Belongs to the glycosyl hydrolase 47 family.

It localises to the endoplasmic reticulum lumen. Alpha-mannosidase-like protein involved in endoplasmic reticulum-associated degradation (ERAD). Delivers misfolded glycoproteins to proteasomes. It lacks mannosidase activity. The protein is ER degradation-enhancing alpha-mannosidase-like protein 1 (mnl1) of Schizosaccharomyces pombe (strain 972 / ATCC 24843) (Fission yeast).